A 476-amino-acid polypeptide reads, in one-letter code: Adenylosuccinate synthetase, chloroplastic (476 aa).

The segment covering 1–20 has biased composition (low complexity); the sequence is AAAAAGRGRSFSPAAPAPSS. Positions 1-34 are disordered; the sequence is AAAAAGRGRSFSPAAPAPSSVRLPGRQAPAPAAA. GTP is bound by residues 63–69 and 91–93; these read GDEGKGK and GHT. Asp-64 (proton acceptor) is an active-site residue. 2 residues coordinate Mg(2+): Asp-64 and Gly-91. IMP is bound by residues 64–67, 89–92, Thr-181, Arg-195, Gln-275, Thr-290, and Arg-354; these read DEGK and NAGH. His-92 serves as the catalytic Proton donor. Residue 350–356 coordinates substrate; sequence TTTGRPR. GTP is bound by residues Arg-356, 382 to 384, and 465 to 467; these read KLD and GVG.

The protein belongs to the adenylosuccinate synthetase family. As to quaternary structure, homodimer. It depends on Mg(2+) as a cofactor.

The protein resides in the plastid. It is found in the chloroplast. It carries out the reaction IMP + L-aspartate + GTP = N(6)-(1,2-dicarboxyethyl)-AMP + GDP + phosphate + 2 H(+). It functions in the pathway purine metabolism; AMP biosynthesis via de novo pathway; AMP from IMP: step 1/2. In terms of biological role, plays an important role in the de novo pathway and in the salvage pathway of purine nucleotide biosynthesis. Catalyzes the first committed step in the biosynthesis of AMP from IMP. The polypeptide is Adenylosuccinate synthetase, chloroplastic (Triticum aestivum (Wheat)).